A 643-amino-acid chain; its full sequence is Threonine--tRNA ligase (643 aa).

In terms of domain architecture, TGS spans 1–61 (MPIITLPDGS…TEDSKLEIIT (61 aa)). A catalytic region spans residues 243-534 (DHRKIGKALD…ITEEYAGFFP (292 aa)). 3 residues coordinate Zn(2+): C334, H385, and H511.

Belongs to the class-II aminoacyl-tRNA synthetase family. As to quaternary structure, homodimer. The cofactor is Zn(2+).

The protein localises to the cytoplasm. It carries out the reaction tRNA(Thr) + L-threonine + ATP = L-threonyl-tRNA(Thr) + AMP + diphosphate + H(+). Its function is as follows. Catalyzes the attachment of threonine to tRNA(Thr) in a two-step reaction: L-threonine is first activated by ATP to form Thr-AMP and then transferred to the acceptor end of tRNA(Thr). Also edits incorrectly charged L-seryl-tRNA(Thr). The sequence is that of Threonine--tRNA ligase from Pasteurella multocida (strain Pm70).